The primary structure comprises 314 residues: 3'-5' exoribonuclease YhaM (314 aa).

In terms of domain architecture, HD spans 163-279; sequence HVVSMLDLAK…LHYIDNLDAK (117 aa).

This sequence belongs to the YhaM family.

Functionally, shows a 3'-5' exoribonuclease activity. The polypeptide is 3'-5' exoribonuclease YhaM (Bacillus mycoides (strain KBAB4) (Bacillus weihenstephanensis)).